A 306-amino-acid polypeptide reads, in one-letter code: Ornithine carbamoyltransferase (306 aa).

Carbamoyl phosphate-binding positions include 54-57 (STRT), Gln81, Arg105, and 132-135 (HPLQ). L-ornithine contacts are provided by residues Asn162, Asp226, and 230–231 (SM). Carbamoyl phosphate is bound by residues 266-267 (CL) and Arg294.

The protein belongs to the aspartate/ornithine carbamoyltransferase superfamily. OTCase family.

The protein localises to the cytoplasm. It carries out the reaction carbamoyl phosphate + L-ornithine = L-citrulline + phosphate + H(+). The protein operates within amino-acid biosynthesis; L-arginine biosynthesis; L-arginine from L-ornithine and carbamoyl phosphate: step 1/3. Functionally, reversibly catalyzes the transfer of the carbamoyl group from carbamoyl phosphate (CP) to the N(epsilon) atom of ornithine (ORN) to produce L-citrulline. The polypeptide is Ornithine carbamoyltransferase (Sulfolobus acidocaldarius (strain ATCC 33909 / DSM 639 / JCM 8929 / NBRC 15157 / NCIMB 11770)).